Consider the following 898-residue polypeptide: Putative disease resistance protein At1g63350 (898 aa).

The stretch at 24–88 (VSYTHNLEKN…IESRVNDLLN (65 aa)) forms a coiled coil. The 304-residue stretch at 137-440 (DQASTSEVEE…CEEIIDGSEG (304 aa)) folds into the NB-ARC domain. 179-186 (GMGGVGKT) contacts ATP. LRR repeat units follow at residues 516–537 (VVRR…LDCM), 538–559 (ELTT…FFNS), 562–584 (KLAV…ISEL), 586–608 (SLQY…QELK), 609–631 (KLIH…SCLH), and 632–654 (NLKV…KELE).

Belongs to the disease resistance NB-LRR family.

In terms of biological role, potential disease resistance protein. In Arabidopsis thaliana (Mouse-ear cress), this protein is Putative disease resistance protein At1g63350.